The following is a 526-amino-acid chain: Lysine--tRNA ligase (526 aa).

Residues 44 to 52 (PSGLPHIGT) carry the 'HIGH' region motif. The short motif at 290–294 (KISKS) is the 'KMSKS' region element. Lys293 lines the ATP pocket.

This sequence belongs to the class-I aminoacyl-tRNA synthetase family.

The protein resides in the cytoplasm. The catalysed reaction is tRNA(Lys) + L-lysine + ATP = L-lysyl-tRNA(Lys) + AMP + diphosphate. This Rickettsia typhi (strain ATCC VR-144 / Wilmington) protein is Lysine--tRNA ligase.